The primary structure comprises 359 residues: Peptide chain release factor 1 (359 aa).

At Q233 the chain carries N5-methylglutamine.

It belongs to the prokaryotic/mitochondrial release factor family. Post-translationally, methylated by PrmC. Methylation increases the termination efficiency of RF1.

It is found in the cytoplasm. Functionally, peptide chain release factor 1 directs the termination of translation in response to the peptide chain termination codons UAG and UAA. This chain is Peptide chain release factor 1, found in Clostridium acetobutylicum (strain ATCC 824 / DSM 792 / JCM 1419 / IAM 19013 / LMG 5710 / NBRC 13948 / NRRL B-527 / VKM B-1787 / 2291 / W).